The chain runs to 206 residues: Small ribosomal subunit protein uS4 (206 aa).

In terms of domain architecture, S4 RNA-binding spans glycine 96–lysine 156.

It belongs to the universal ribosomal protein uS4 family. In terms of assembly, part of the 30S ribosomal subunit. Contacts protein S5. The interaction surface between S4 and S5 is involved in control of translational fidelity.

One of the primary rRNA binding proteins, it binds directly to 16S rRNA where it nucleates assembly of the body of the 30S subunit. Functionally, with S5 and S12 plays an important role in translational accuracy. The chain is Small ribosomal subunit protein uS4 from Serratia proteamaculans (strain 568).